A 1211-amino-acid polypeptide reads, in one-letter code: MIDVNKFESMQIGLASPDKIRSWSYGEVKKPETINYRTLKPEKQGLFDERIFGPTKDYECACGKYKRIRYKGRVCDRCGVEVTSAKVRRERMGHIELAAPVSHIWYFKGIPSRMGLVLDMSPRSLEEVIYFASYVVLDPGDTPLEKKQLLTEAEYRDKKAEYGDRFKAEMGAAAIQKLLADVDLEKEAAELKEELKEATGQKRTRAIRRLDILEAFIKSGNKPEWMVMDVIPVMPPDLRPMVQLEGGRFATSDLNDLYRRVINRNNRLKRLLKLQAPGIIVQNEKRMLQEAVDALIDNGRRGRPVAGPGNRPLKSLSHLLKGKQGRFRQNLLGKRVDYSGRSVIDVGPSLKLNQMGLPVPMALELFKPFIMHELVKRGLSANVKSAKRKIDRSDDDVFDVLEDVIKEHPVLLNRAPTLHRLGIQAFEPILVSGKSMRLHPLVCSAYNADFDGDQMAIHVPLSDEAQAEARLLMLAAHHILSPRDGEPIVSPSQDMVIGNYYMTTEDKGREGEGMIFKDTDEAELAYRNDYVSLQTRVGVQVSAFPEKPFTDDQRGKIMVTTVGKLLFNRIMPKDFAYINEPTDANIQNGVDDRFFLEPGQDIHEYLENAPLVPPFKKGFLSDLIAEVYKRYKVTKTSQFLDRIKDLGYYESTISGLTTAMSDIHDLPEKPEILDKAQKQVTLITKQFRRGLITDDERYERVIGAWNDAKDEVQNKLIEHMDIHNPINMMSDSGARGNISNFTQLAGMRGLMASPNGKIMELPVKSNFYEGLSVLEMFISSHGARKGMTDTALKTANSGYLTRRLVDVAQDVVVREKDCGTDRGLEVTAITNGNEMIEPLYDRIMGRYTMKSVFDPKTGEKIVGKNVLIDEEMAQKIVDAGVKKVTIRSAFTCNTEHGVCERCYGRNAATGDRVEAGEAVGTVAAQSIGEPGTQLTLRNFHTGGVAGNDDITQGLPRIQEIVEARNPKGRATITEVTGEVVSIEENPAERTKDITIKGETDTRTYTLPITARMKVAEGDFIHRGAPLNEGSIDPKELIQVRDVLSTETYLLSQVQGVYRMQGIDLLDKHVEIMIRQMMRKVRVMDPGDTDLLPGQLMDISQFRDANKDTLVAGNIPATARPVILGITKAALETNSFLSAASFQETTRVLTDAAIRGKNDPLVGLKENVIIGKIIPAGTGMSAYRNIKPKEVSVAAYSIKDIEAKLKEEDKQN.

Positions 60, 62, 75, and 78 each coordinate Zn(2+). The Mg(2+) site is built by Asp449, Asp451, and Asp453. Residues Cys818, Cys892, Cys899, and Cys902 each coordinate Zn(2+).

It belongs to the RNA polymerase beta' chain family. In terms of assembly, the RNAP catalytic core consists of 2 alpha, 1 beta, 1 beta' and 1 omega subunit. When a sigma factor is associated with the core the holoenzyme is formed, which can initiate transcription. Mg(2+) serves as cofactor. It depends on Zn(2+) as a cofactor.

It carries out the reaction RNA(n) + a ribonucleoside 5'-triphosphate = RNA(n+1) + diphosphate. Its function is as follows. DNA-dependent RNA polymerase catalyzes the transcription of DNA into RNA using the four ribonucleoside triphosphates as substrates. In Limosilactobacillus reuteri (strain DSM 20016) (Lactobacillus reuteri), this protein is DNA-directed RNA polymerase subunit beta'.